The chain runs to 413 residues: 3-oxo-tetronate kinase (413 aa).

ATP contacts are provided by residues serine 254, 354 to 357, and glycine 397; that span reads GGET.

It belongs to the four-carbon acid sugar kinase family.

The enzyme catalyses 3-dehydro-L-erythronate + ATP = 3-dehydro-4-O-phospho-L-erythronate + ADP + H(+). It carries out the reaction 3-dehydro-D-erythronate + ATP = 3-dehydro-4-O-phospho-D-erythronate + ADP + H(+). Functionally, catalyzes the ATP-dependent phosphorylation of 3-oxo-tetronate to 3-oxo-tetronate 4-phosphate. This is 3-oxo-tetronate kinase from Haemophilus influenzae (strain ATCC 51907 / DSM 11121 / KW20 / Rd).